The primary structure comprises 176 residues: NAD(P)H-quinone oxidoreductase subunit 6, chloroplastic (176 aa).

Transmembrane regions (helical) follow at residues 10-30 (FLLV…VLLP), 32-52 (PIYS…FYIL), 61-81 (AQLL…VMFM), 92-112 (LWTV…ISLI), and 152-172 (FFLP…GAIA).

This sequence belongs to the complex I subunit 6 family. NDH is composed of at least 16 different subunits, 5 of which are encoded in the nucleus.

It is found in the plastid. The protein localises to the chloroplast thylakoid membrane. The catalysed reaction is a plastoquinone + NADH + (n+1) H(+)(in) = a plastoquinol + NAD(+) + n H(+)(out). It catalyses the reaction a plastoquinone + NADPH + (n+1) H(+)(in) = a plastoquinol + NADP(+) + n H(+)(out). Its function is as follows. NDH shuttles electrons from NAD(P)H:plastoquinone, via FMN and iron-sulfur (Fe-S) centers, to quinones in the photosynthetic chain and possibly in a chloroplast respiratory chain. The immediate electron acceptor for the enzyme in this species is believed to be plastoquinone. Couples the redox reaction to proton translocation, and thus conserves the redox energy in a proton gradient. This chain is NAD(P)H-quinone oxidoreductase subunit 6, chloroplastic (ndhG), found in Atropa belladonna (Belladonna).